A 38-amino-acid polypeptide reads, in one-letter code: Large ribosomal subunit protein bL36 (38 aa).

The protein belongs to the bacterial ribosomal protein bL36 family.

In Buchnera aphidicola subsp. Acyrthosiphon pisum (strain 5A), this protein is Large ribosomal subunit protein bL36.